We begin with the raw amino-acid sequence, 85 residues long: Large ribosomal subunit protein bL27 (85 aa).

Residues 1 to 22 (MAHKKAGGSTRNGRDSESKRLG) are disordered.

It belongs to the bacterial ribosomal protein bL27 family.

This is Large ribosomal subunit protein bL27 from Vibrio vulnificus (strain CMCP6).